Consider the following 83-residue polypeptide: MAKNRVLTIFYCTIYYCICFKYVLLGMVVEKTQGHICHDYLEGDHCDPKDCNLDCRDKWKGTGTCEPPTGTPLTRTCYCTYDC.

The first 34 residues, 1–34 (MAKNRVLTIFYCTIYYCICFKYVLLGMVVEKTQG), serve as a signal peptide directing secretion. 4 disulfides stabilise this stretch: Cys37–Cys83, Cys46–Cys65, Cys51–Cys77, and Cys55–Cys79.

The protein belongs to the DEFL family.

It is found in the secreted. The polypeptide is Putative defensin-like protein 131 (LCR29) (Arabidopsis thaliana (Mouse-ear cress)).